The following is a 583-amino-acid chain: MTGWYEFPVMIGFVSAAVFLLISVAYLPLLNDLYWSTLKSLTPPAGIVADLLVTNGTIFTSDSSLPFADSMAIRNGRILKVGSFATLKGFIGDGTMEVNLEGKIVVPGLIDSHVHLISGGLQMAQVGLRGVSQKDEFCKMVKDAVQNAKEGSWILGGGWNNDFWGGELPSASWIDEISPRNPVWLIRMDGHMALANSLALKIAGVISLTEDPVGGTIMRMPSGEPTGLLIDAAMELVTPWVKEISVDERREALFRASKYALTRGVTTVIDLGRYFPGTTDELSWKDFQDVYLYADSSKKMMIRTCLFFPITTWSRLLDLKLQKGSVLSEWLYLGGVKAFIDGSLGSNSALFYEEYIDTPNNYGLEVMDPEKLSNFTMAADKSGLQVAIHAIGDKANDMILDMYESVAAANGDRDRRFRIEHAQHLAPGSANRFGQLHIVASVQPDHLLDDADSVAKKLGSERAVKESYLFQSLLNGNALLALGSDWPVADINPLHSIRTAVKRIPPKWDHAWIPSERISFTDALIAQTISAARAAFLDHHLGSLSPGKLADFVILSTNSWDEFSKDVSASVLATYVGGKQLYP.

A helical membrane pass occupies residues 7 to 27 (FPVMIGFVSAAVFLLISVAYL). N-linked (GlcNAc...) asparagine glycosylation is found at N55 and N374.

The protein belongs to the metallo-dependent hydrolases superfamily. As to expression, expressed at low level in seedlings, roots, leaves, stems, flowers, and siliques.

The protein resides in the membrane. It is found in the cytoplasm. The protein localises to the perinuclear region. Functionally, required for phyA-controlled responses to continuous far-red light (FRc) conditions, including the inhibition of hypocotyl elongation and the regulation of XTH15/XTR7 expression. The polypeptide is Protein LONG AFTER FAR-RED 3 (Arabidopsis thaliana (Mouse-ear cress)).